A 483-amino-acid polypeptide reads, in one-letter code: Aspartyl/glutamyl-tRNA(Asn/Gln) amidotransferase subunit B (483 aa).

It belongs to the GatB/GatE family. GatB subfamily. In terms of assembly, heterotrimer of A, B and C subunits.

The catalysed reaction is L-glutamyl-tRNA(Gln) + L-glutamine + ATP + H2O = L-glutaminyl-tRNA(Gln) + L-glutamate + ADP + phosphate + H(+). It catalyses the reaction L-aspartyl-tRNA(Asn) + L-glutamine + ATP + H2O = L-asparaginyl-tRNA(Asn) + L-glutamate + ADP + phosphate + 2 H(+). Allows the formation of correctly charged Asn-tRNA(Asn) or Gln-tRNA(Gln) through the transamidation of misacylated Asp-tRNA(Asn) or Glu-tRNA(Gln) in organisms which lack either or both of asparaginyl-tRNA or glutaminyl-tRNA synthetases. The reaction takes place in the presence of glutamine and ATP through an activated phospho-Asp-tRNA(Asn) or phospho-Glu-tRNA(Gln). This chain is Aspartyl/glutamyl-tRNA(Asn/Gln) amidotransferase subunit B, found in Brachyspira hyodysenteriae (strain ATCC 49526 / WA1).